The primary structure comprises 588 residues: Cyclin-dependent kinase 8 (588 aa).

Residues 26–348 (FENSKEIGRG…CEEAMNDIYF (323 aa)) form the Protein kinase domain. Residues 32–40 (IGRGTYGLV) and lysine 60 each bind ATP. Aspartate 158 functions as the Proton acceptor in the catalytic mechanism. 3 disordered regions span residues 376–426 (MTVA…GAHP), 510–529 (PGPSGYYPQRPGQPTGAVPG), and 546–588 (MRAP…QYHR). Low complexity predominate over residues 382–426 (QAQQQHQQQQVQMQQQPQMGQQQMMGQPQMVQPQMGQPPMGGAHP). Residues 557–588 (MPGRGMAPPQMGQQQPGPNQQQQQQWQQQYHR) show a composition bias toward low complexity.

This sequence belongs to the protein kinase superfamily. CMGC Ser/Thr protein kinase family. CDC2/CDKX subfamily. In terms of assembly, component of the Mediator complex. Requires Mg(2+) as cofactor.

It localises to the nucleus. The enzyme catalyses L-seryl-[protein] + ATP = O-phospho-L-seryl-[protein] + ADP + H(+). It carries out the reaction L-threonyl-[protein] + ATP = O-phospho-L-threonyl-[protein] + ADP + H(+). It catalyses the reaction [DNA-directed RNA polymerase] + ATP = phospho-[DNA-directed RNA polymerase] + ADP + H(+). Functionally, component of the Mediator complex, a coactivator involved in regulated gene transcription of nearly all RNA polymerase II-dependent genes. Mediator functions as a bridge to convey information from gene-specific regulatory proteins to the basal RNA polymerase II transcription machinery. Mediator is recruited to promoters by direct interactions with regulatory proteins and serves as a scaffold for the assembly of a functional pre-initiation complex with RNA polymerase II and the general transcription factors. Phosphorylates the CTD (C-terminal domain) of the large subunit of RNA polymerase II (RNAp II), which may inhibit the formation of a transcription initiation complex. The protein is Cyclin-dependent kinase 8 (cdk-8) of Caenorhabditis elegans.